The primary structure comprises 461 residues: Nucleobindin-1 (461 aa).

A signal peptide spans 1-26 (MPPSGPRGTLLLLPLLLLLLLRAVLA). Positions 42-51 (TESPDTGLYY) are O-glycosylated at one site. S86 is subject to Phosphoserine; by FAM20C. T148 carries the post-translational modification Phosphothreonine; by FAM20C. Residues 150–218 (EARDLELLIQ…QQRRHREHPK (69 aa)) adopt a coiled-coil conformation. Residues 172-218 (HHEEFKRYEMLKEHERRRYLESLGEEQRKEAERKLEEQQRRHREHPK) mediate DNA binding. Positions 193–210 (SLGEEQRKEAERKLEEQQ) are enriched in basic and acidic residues. A disordered region spans residues 193 to 221 (SLGEEQRKEAERKLEEQQRRHREHPKVNV). Positions 228–321 (LKEVWEELDG…VTLEEFLAST (94 aa)) are binds to GNAI2 and GNAI3. 2 EF-hand domains span residues 240–275 (PNRFNPKTFFILHDINSDGVLDEQELEALFTKELEK) and 292–327 (ERLRMREHVMKNVDTNQDRLVTLEEFLASTQRKEFG). Ca(2+) contacts are provided by D253, N255, D257, E264, D305, N307, D309, and E316. Residues 303–333 (NVDTNQDRLVTLEEFLASTQRKEFGDTGEGW) carry the GBA motif. Residues 341 to 407 (AYTEEELRRF…QRKQQQQQQQ (67 aa)) are a coiled coil. Positions 368–461 (LSQETEALGR…LPEVEVPQHL (94 aa)) are disordered. S369 carries the post-translational modification Phosphoserine; by FAM20C. Over residues 437–461 (DQKEVDTSEKKLLERLPEVEVPQHL) the composition is skewed to basic and acidic residues.

The protein belongs to the nucleobindin family. In terms of assembly, interacts (via GBA motif) with guanine nucleotide-binding protein G(i) alpha subunits GNAI1, GNAI2 and GNAI3 with higher affinity for GNAI1 and GNAI3 than for GNAI2. Preferentially interacts with inactive rather than active GNAI3. Interaction with GNAI3 is inhibited when NUCB1 binds calcium, probably due to a conformational change which renders the GBA motif inaccessible. O-glycosylated. In terms of tissue distribution, expressed both in fetal and adult heart, lung, liver, kidney and brain, and in adult skeletal muscle, placenta and pancreas.

It is found in the golgi apparatus. The protein localises to the cis-Golgi network membrane. Its subcellular location is the cytoplasm. The protein resides in the secreted. Functionally, major calcium-binding protein of the Golgi which may have a role in calcium homeostasis. Acts as a non-receptor guanine nucleotide exchange factor which binds to and activates alpha subunits of guanine nucleotide-binding proteins (G proteins). The protein is Nucleobindin-1 (NUCB1) of Homo sapiens (Human).